We begin with the raw amino-acid sequence, 444 residues long: Chromosome partition protein MukF (444 aa).

A leucine-zipper region spans residues 212 to 240; the sequence is LDETSGNLRELQDTLNAAGDKLQAQLLRI.

This sequence belongs to the MukF family. As to quaternary structure, interacts, and probably forms a ternary complex, with MukE and MukB via its C-terminal region. The complex formation is stimulated by calcium or magnesium. It is required for an interaction between MukE and MukB.

The protein localises to the cytoplasm. It localises to the nucleoid. Its function is as follows. Involved in chromosome condensation, segregation and cell cycle progression. May participate in facilitating chromosome segregation by condensation DNA from both sides of a centrally located replisome during cell division. Not required for mini-F plasmid partitioning. Probably acts via its interaction with MukB and MukE. Overexpression results in anucleate cells. It has a calcium binding activity. This chain is Chromosome partition protein MukF, found in Haemophilus influenzae (strain PittEE).